The chain runs to 156 residues: ATP synthase subunit b (156 aa).

Residues 7-26 traverse the membrane as a helical segment; sequence LIGQLIAFALFVAFCMKYVW.

It belongs to the ATPase B chain family. F-type ATPases have 2 components, F(1) - the catalytic core - and F(0) - the membrane proton channel. F(1) has five subunits: alpha(3), beta(3), gamma(1), delta(1), epsilon(1). F(0) has three main subunits: a(1), b(2) and c(10-14). The alpha and beta chains form an alternating ring which encloses part of the gamma chain. F(1) is attached to F(0) by a central stalk formed by the gamma and epsilon chains, while a peripheral stalk is formed by the delta and b chains.

The protein localises to the cell inner membrane. Functionally, f(1)F(0) ATP synthase produces ATP from ADP in the presence of a proton or sodium gradient. F-type ATPases consist of two structural domains, F(1) containing the extramembraneous catalytic core and F(0) containing the membrane proton channel, linked together by a central stalk and a peripheral stalk. During catalysis, ATP synthesis in the catalytic domain of F(1) is coupled via a rotary mechanism of the central stalk subunits to proton translocation. Its function is as follows. Component of the F(0) channel, it forms part of the peripheral stalk, linking F(1) to F(0). In Haemophilus ducreyi (strain 35000HP / ATCC 700724), this protein is ATP synthase subunit b.